A 535-amino-acid polypeptide reads, in one-letter code: Cytochrome c oxidase subunit 1 (535 aa).

The chain crosses the membrane as a helical span at residues 17 to 37; sequence ILYFIFAIFSGVIGSTMSLII. Residues Glu-40, Ala-43, and Gly-45 each coordinate Ca(2+). Helical transmembrane passes span 58–78, 104–124, 147–167, 184–204, 236–256, and 268–288; these read VLVVGHALLMIFFLVMPGLVG, FWLLPPALVCLVASTLIESWA, LGIFAIHLTSISSLLGAINFI, PLFVWAIIITAVMLLLSLPVL, LFWFFGHPEVYILIVPGFGII, and VFGEISMVYAMASIAFLGFLV. His-63 lines the Fe(II)-heme a pocket. His-242 is a binding site for Cu cation. Positions 242-246 form a cross-link, 1'-histidyl-3'-tyrosine (His-Tyr); it reads HPEVY. O2 is bound at residue Tyr-246. 2 residues coordinate Cu cation: His-291 and His-292. 2 helical membrane-spanning segments follow: residues 311–331 and 339–359; these read MVIAVPTGIKIFSWLATLYGG and MLYAIAFLFLFTIGGLTGVAL. Residues His-369 and Asp-370 each coordinate Mg(2+). 2 helical membrane-spanning segments follow: residues 373-393 and 413-433; these read YVVGHFHYVLSMGAIFSLFAG and IQFWLIFVGANVIFMPMHFLG. His-377 contributes to the heme a3 binding site. His-379 lines the Fe(II)-heme a pocket. A Ca(2+)-binding site is contributed by Pro-442. Residues 453–473 traverse the membrane as a helical segment; sequence YVSSIGSVIAIISLALFIYII.

Belongs to the heme-copper respiratory oxidase family. Component of the cytochrome c oxidase (complex IV, CIV), a multisubunit enzyme composed of a catalytic core of 3 subunits and several supernumerary subunits. The complex exists as a monomer or a dimer and forms supercomplexes (SCs) in the inner mitochondrial membrane with ubiquinol-cytochrome c oxidoreductase (cytochrome b-c1 complex, complex III, CIII). It depends on heme as a cofactor. Cu cation serves as cofactor.

The protein resides in the mitochondrion inner membrane. It carries out the reaction 4 Fe(II)-[cytochrome c] + O2 + 8 H(+)(in) = 4 Fe(III)-[cytochrome c] + 2 H2O + 4 H(+)(out). The protein operates within energy metabolism; oxidative phosphorylation. Component of the cytochrome c oxidase, the last enzyme in the mitochondrial electron transport chain which drives oxidative phosphorylation. The respiratory chain contains 3 multisubunit complexes succinate dehydrogenase (complex II, CII), ubiquinol-cytochrome c oxidoreductase (cytochrome b-c1 complex, complex III, CIII) and cytochrome c oxidase (complex IV, CIV), that cooperate to transfer electrons derived from NADH and succinate to molecular oxygen, creating an electrochemical gradient over the inner membrane that drives transmembrane transport and the ATP synthase. Cytochrome c oxidase is the component of the respiratory chain that catalyzes the reduction of oxygen to water. Electrons originating from reduced cytochrome c in the intermembrane space (IMS) are transferred via the dinuclear copper A center (CU(A)) of subunit 2 and heme A of subunit 1 to the active site in subunit 1, a binuclear center (BNC) formed by heme A3 and copper B (CU(B)). The BNC reduces molecular oxygen to 2 water molecules using 4 electrons from cytochrome c in the IMS and 4 protons from the mitochondrial matrix. In Wickerhamomyces canadensis (Yeast), this protein is Cytochrome c oxidase subunit 1 (COX1).